The chain runs to 340 residues: MSEKNAYAKSGVDVEAGYEVVERIKKHVARTERAGVMGALGGFGGMFDLSQTGVKEPVLISGTDGVGTKLMLAIKYDKHDTIGQDCVAMCVNDIIAAGAEPLYFLDYVATGKNEPAKLEQVVAGVAEGCVQAGAALIGGETAEMPGMYGEDDYDLAGFAVGVAEKSQIIDGSKVKEGDILLGLASSGIHSNGYSLVRRVFADYTGDEVLPELEGKQLKDVLLEPTRIYVKAALPLIKEELVNGIAHITGGGFIENVPRMFADDLAAEIDEDKVPVLPIFKALEKYGDIKHEEMFEIFNMGVGLMLAVSPENVNRVKELLDEPVYEIGRIIKKADASVVIK.

Belongs to the AIR synthase family.

The protein resides in the cytoplasm. The enzyme catalyses 2-formamido-N(1)-(5-O-phospho-beta-D-ribosyl)acetamidine + ATP = 5-amino-1-(5-phospho-beta-D-ribosyl)imidazole + ADP + phosphate + H(+). It functions in the pathway purine metabolism; IMP biosynthesis via de novo pathway; 5-amino-1-(5-phospho-D-ribosyl)imidazole from N(2)-formyl-N(1)-(5-phospho-D-ribosyl)glycinamide: step 2/2. In Streptococcus agalactiae serotype III (strain NEM316), this protein is Phosphoribosylformylglycinamidine cyclo-ligase.